Here is a 394-residue protein sequence, read N- to C-terminus: L-lactate dehydrogenase (394 aa).

The region spanning 1 to 380 is the FMN hydroxy acid dehydrogenase domain; that stretch reads MIISAASDYR…SRDSLVQNAE (380 aa). Substrate is bound at residue Tyr-24. FMN-binding residues include Ser-106 and Gln-127. Residue Tyr-129 coordinates substrate. Thr-155 contributes to the FMN binding site. Arg-164 provides a ligand contact to substrate. Lys-251 is a binding site for FMN. Residue His-275 is the Proton acceptor of the active site. Substrate is bound at residue Arg-278. 306–330 is a binding site for FMN; the sequence is DSGIRNGLDVVRMIALGADSVLLGR.

The protein belongs to the FMN-dependent alpha-hydroxy acid dehydrogenase family. The cofactor is FMN.

It localises to the cell inner membrane. The catalysed reaction is (S)-lactate + A = pyruvate + AH2. Functionally, catalyzes the conversion of L-lactate to pyruvate. Is coupled to the respiratory chain. In Klebsiella pneumoniae subsp. pneumoniae (strain ATCC 700721 / MGH 78578), this protein is L-lactate dehydrogenase.